Consider the following 758-residue polypeptide: 5-methyltetrahydropteroyltriglutamate--homocysteine methyltransferase (758 aa).

5-methyltetrahydropteroyltri-L-glutamate contacts are provided by residues 16–19 (RELK) and K112. Residues 433-435 (IGS) and E486 contribute to the L-homocysteine site. Residues 433–435 (IGS) and E486 contribute to the L-methionine site. Residues 517-518 (RC) and W563 contribute to the 5-methyltetrahydropteroyltri-L-glutamate site. D601 provides a ligand contact to L-homocysteine. D601 lines the L-methionine pocket. E607 lines the 5-methyltetrahydropteroyltri-L-glutamate pocket. Zn(2+) contacts are provided by H643, C645, and E667. The Proton donor role is filled by H696. A Zn(2+)-binding site is contributed by C728.

This sequence belongs to the vitamin-B12 independent methionine synthase family. Zn(2+) serves as cofactor.

It catalyses the reaction 5-methyltetrahydropteroyltri-L-glutamate + L-homocysteine = tetrahydropteroyltri-L-glutamate + L-methionine. Its pathway is amino-acid biosynthesis; L-methionine biosynthesis via de novo pathway; L-methionine from L-homocysteine (MetE route): step 1/1. In terms of biological role, catalyzes the transfer of a methyl group from 5-methyltetrahydrofolate to homocysteine resulting in methionine formation. The polypeptide is 5-methyltetrahydropteroyltriglutamate--homocysteine methyltransferase (Neisseria meningitidis serogroup B (strain ATCC BAA-335 / MC58)).